The sequence spans 386 residues: Succinate--CoA ligase [ADP-forming] subunit beta (386 aa).

Residues 9–244 enclose the ATP-grasp domain; it reads KQILKRFGIS…YDEEIPEEIE (236 aa). ATP is bound by residues K46, 53–55, E99, C102, and E107; that span reads GRG. Mg(2+)-binding residues include N199 and D213. Residues N264 and 320 to 322 contribute to the substrate site; that span reads GIM.

Belongs to the succinate/malate CoA ligase beta subunit family. In terms of assembly, heterotetramer of two alpha and two beta subunits. The cofactor is Mg(2+).

It carries out the reaction succinate + ATP + CoA = succinyl-CoA + ADP + phosphate. The catalysed reaction is GTP + succinate + CoA = succinyl-CoA + GDP + phosphate. The protein operates within carbohydrate metabolism; tricarboxylic acid cycle; succinate from succinyl-CoA (ligase route): step 1/1. In terms of biological role, succinyl-CoA synthetase functions in the citric acid cycle (TCA), coupling the hydrolysis of succinyl-CoA to the synthesis of either ATP or GTP and thus represents the only step of substrate-level phosphorylation in the TCA. The beta subunit provides nucleotide specificity of the enzyme and binds the substrate succinate, while the binding sites for coenzyme A and phosphate are found in the alpha subunit. The protein is Succinate--CoA ligase [ADP-forming] subunit beta of Ehrlichia ruminantium (strain Welgevonden).